Here is a 483-residue protein sequence, read N- to C-terminus: Cobyric acid synthase (483 aa).

The 179-residue stretch at 252–430 (ALQVVAVAYP…LHRLFDSGPF (179 aa)) folds into the GATase cobBQ-type domain. C333 (nucleophile) is an active-site residue. The active site involves H422.

This sequence belongs to the CobB/CobQ family. CobQ subfamily.

It functions in the pathway cofactor biosynthesis; adenosylcobalamin biosynthesis. Its function is as follows. Catalyzes amidations at positions B, D, E, and G on adenosylcobyrinic A,C-diamide. NH(2) groups are provided by glutamine, and one molecule of ATP is hydrogenolyzed for each amidation. This is Cobyric acid synthase from Halorhodospira halophila (strain DSM 244 / SL1) (Ectothiorhodospira halophila (strain DSM 244 / SL1)).